A 336-amino-acid polypeptide reads, in one-letter code: Phospho-N-acetylmuramoyl-pentapeptide-transferase (336 aa).

10 helical membrane-spanning segments follow: residues 3-23, 53-73, 78-98, 118-138, 143-163, 174-194, 200-220, 226-246, 254-274, and 316-336; these read LTLI…PYFI, GGTV…LFSI, SLAL…IGFL, LALQ…PSGI, VFGY…FWVV, GIDG…GVIA, FDVL…FCFN, VFMG…ISIA, LIIG…VFYF, and AFLW…LYVF.

It belongs to the glycosyltransferase 4 family. MraY subfamily. It depends on Mg(2+) as a cofactor.

It localises to the cell membrane. It catalyses the reaction UDP-N-acetyl-alpha-D-muramoyl-L-alanyl-gamma-D-glutamyl-L-lysyl-D-alanyl-D-alanine + di-trans,octa-cis-undecaprenyl phosphate = Mur2Ac(oyl-L-Ala-gamma-D-Glu-L-Lys-D-Ala-D-Ala)-di-trans,octa-cis-undecaprenyl diphosphate + UMP. It functions in the pathway cell wall biogenesis; peptidoglycan biosynthesis. Its function is as follows. Catalyzes the initial step of the lipid cycle reactions in the biosynthesis of the cell wall peptidoglycan: transfers peptidoglycan precursor phospho-MurNAc-pentapeptide from UDP-MurNAc-pentapeptide onto the lipid carrier undecaprenyl phosphate, yielding undecaprenyl-pyrophosphoryl-MurNAc-pentapeptide, known as lipid I. This chain is Phospho-N-acetylmuramoyl-pentapeptide-transferase, found in Streptococcus pyogenes serotype M18 (strain MGAS8232).